Reading from the N-terminus, the 334-residue chain is L-lactate dehydrogenase B chain (334 aa).

NAD(+) contacts are provided by residues 30-58 and Arg-100; that span reads GQVG…LEDK. Substrate contacts are provided by Arg-107, Asn-139, and Arg-170. Residue Asn-139 coordinates NAD(+). His-194 acts as the Proton acceptor in catalysis. Substrate is bound at residue Thr-249.

It belongs to the LDH/MDH superfamily. LDH family. Homotetramer.

It is found in the cytoplasm. The catalysed reaction is (S)-lactate + NAD(+) = pyruvate + NADH + H(+). Its pathway is fermentation; pyruvate fermentation to lactate; (S)-lactate from pyruvate: step 1/1. Functionally, interconverts simultaneously and stereospecifically pyruvate and lactate with concomitant interconversion of NADH and NAD(+). This chain is L-lactate dehydrogenase B chain (ldhb), found in Squalus acanthias (Spiny dogfish).